Here is a 132-residue protein sequence, read N- to C-terminus: Small ribosomal subunit protein uS8c (132 aa).

Belongs to the universal ribosomal protein uS8 family. As to quaternary structure, part of the 30S ribosomal subunit.

The protein resides in the plastid. The protein localises to the chloroplast. One of the primary rRNA binding proteins, it binds directly to 16S rRNA central domain where it helps coordinate assembly of the platform of the 30S subunit. The sequence is that of Small ribosomal subunit protein uS8c (rps8) from Zygnema circumcarinatum (Green alga).